We begin with the raw amino-acid sequence, 150 residues long: 15 kDa calcium-binding protein (150 aa).

A1 is modified (N-acetylalanine). 4 EF-hand domains span residues 7–42 (TDAE…AGKS), 43–78 (FSEE…KMMK), 81–116 (WKKS…RIEP), and 118–150 (MSKE…IKSS). Ca(2+) is bound by residues D22, D24, S26, T28, D56, D58, S60, T62, E67, D94, D96, N98, E105, D131, D133, D135, K137, and E142.

The protein resides in the nucleus. Its subcellular location is the cytoplasm. It localises to the cytoskeleton. The protein localises to the spindle. May play an important role in mitosis of sea urchin egg. May function as a Ca(2+)-dependent intracellular modulator of microtubule assembly. The sequence is that of 15 kDa calcium-binding protein from Hemicentrotus pulcherrimus (Sea urchin).